The sequence spans 636 residues: Chaperone protein DnaK (636 aa).

Residue threonine 198 is modified to Phosphothreonine; by autocatalysis. The tract at residues 602–636 (QAEGAQPGGEAAGEASAKDEKVVDADFEEVKDDKK) is disordered. Acidic residues predominate over residues 626–636 (ADFEEVKDDKK).

This sequence belongs to the heat shock protein 70 family.

In terms of biological role, acts as a chaperone. The chain is Chaperone protein DnaK from Geobacter sulfurreducens (strain ATCC 51573 / DSM 12127 / PCA).